A 121-amino-acid chain; its full sequence is Small ribosomal subunit protein uS13 (121 aa).

A disordered region spans residues 94–121 (GLPLRGQRTRTNARTRKGPRRAAQSLKK).

It belongs to the universal ribosomal protein uS13 family. In terms of assembly, part of the 30S ribosomal subunit. Forms a loose heterodimer with protein S19. Forms two bridges to the 50S subunit in the 70S ribosome.

Its function is as follows. Located at the top of the head of the 30S subunit, it contacts several helices of the 16S rRNA. In the 70S ribosome it contacts the 23S rRNA (bridge B1a) and protein L5 of the 50S subunit (bridge B1b), connecting the 2 subunits; these bridges are implicated in subunit movement. Contacts the tRNAs in the A and P-sites. This chain is Small ribosomal subunit protein uS13, found in Paraburkholderia phymatum (strain DSM 17167 / CIP 108236 / LMG 21445 / STM815) (Burkholderia phymatum).